Reading from the N-terminus, the 638-residue chain is tRNA uridine 5-carboxymethylaminomethyl modification enzyme MnmG (638 aa).

FAD contacts are provided by residues 13–18, Val125, and Ser180; that span reads GGGHAG. Position 273 to 287 (273 to 287) interacts with NAD(+); that stretch reads GPRYCPSIEDKIHRF. Gln370 serves as a coordination point for FAD.

It belongs to the MnmG family. In terms of assembly, homodimer. Heterotetramer of two MnmE and two MnmG subunits. FAD serves as cofactor.

It is found in the cytoplasm. NAD-binding protein involved in the addition of a carboxymethylaminomethyl (cmnm) group at the wobble position (U34) of certain tRNAs, forming tRNA-cmnm(5)s(2)U34. The protein is tRNA uridine 5-carboxymethylaminomethyl modification enzyme MnmG of Cellvibrio japonicus (strain Ueda107) (Pseudomonas fluorescens subsp. cellulosa).